The sequence spans 70 residues: Large ribosomal subunit protein bL32 (70 aa).

The segment covering 1–19 has biased composition (basic residues); sequence MAVPKRKTTPSRRGMRRSH. The segment at 1–21 is disordered; that stretch reads MAVPKRKTTPSRRGMRRSHQA.

It belongs to the bacterial ribosomal protein bL32 family.

The sequence is that of Large ribosomal subunit protein bL32 from Gluconobacter oxydans (strain 621H) (Gluconobacter suboxydans).